Consider the following 384-residue polypeptide: S-adenosylmethionine synthase (384 aa).

Histidine 15 contributes to the ATP binding site. Residue aspartate 17 participates in Mg(2+) binding. Residue glutamate 43 participates in K(+) binding. Residues glutamate 56 and glutamine 99 each coordinate L-methionine. Positions 99 to 109 (QSPDINQGVDR) are flexible loop. ATP contacts are provided by residues 164-166 (DAK), 230-231 (RF), aspartate 239, 245-246 (RK), alanine 262, and lysine 266. Residue aspartate 239 coordinates L-methionine. Lysine 270 contributes to the L-methionine binding site.

This sequence belongs to the AdoMet synthase family. In terms of assembly, homotetramer; dimer of dimers. Requires Mg(2+) as cofactor. K(+) is required as a cofactor.

The protein localises to the cytoplasm. The enzyme catalyses L-methionine + ATP + H2O = S-adenosyl-L-methionine + phosphate + diphosphate. It participates in amino-acid biosynthesis; S-adenosyl-L-methionine biosynthesis; S-adenosyl-L-methionine from L-methionine: step 1/1. In terms of biological role, catalyzes the formation of S-adenosylmethionine (AdoMet) from methionine and ATP. The overall synthetic reaction is composed of two sequential steps, AdoMet formation and the subsequent tripolyphosphate hydrolysis which occurs prior to release of AdoMet from the enzyme. This Escherichia coli (strain K12 / DH10B) protein is S-adenosylmethionine synthase.